We begin with the raw amino-acid sequence, 485 residues long: Pyruvate kinase (485 aa).

Substrate is bound at residue Arg-33. Asn-35, Ser-37, Asp-67, and Thr-68 together coordinate K(+). 35 to 38 (NFSH) is a binding site for ATP. The ATP site is built by Arg-74 and Lys-155. Glu-221 is a binding site for Mg(2+). Gly-244, Asp-245, and Thr-277 together coordinate substrate. A Mg(2+)-binding site is contributed by Asp-245.

It belongs to the pyruvate kinase family. As to quaternary structure, homotetramer. Mg(2+) serves as cofactor. Requires K(+) as cofactor.

The enzyme catalyses pyruvate + ATP = phosphoenolpyruvate + ADP + H(+). It functions in the pathway carbohydrate degradation; glycolysis; pyruvate from D-glyceraldehyde 3-phosphate: step 5/5. The protein is Pyruvate kinase (pyk) of Chlamydia trachomatis serovar L2 (strain ATCC VR-902B / DSM 19102 / 434/Bu).